Here is a 147-residue protein sequence, read N- to C-terminus: Hemoglobin subunit beta (147 aa).

Positions 3–147 (HWTAEEKQLI…VAHALARKYH (145 aa)) constitute a Globin domain. Residues histidine 64 and histidine 93 each coordinate heme b.

The protein belongs to the globin family. In terms of assembly, heterotetramer of two alpha chains and two beta chains. As to expression, red blood cells.

Its function is as follows. Involved in oxygen transport from the lung to the various peripheral tissues. The protein is Hemoglobin subunit beta (HBB) of Anas platyrhynchos (Mallard).